We begin with the raw amino-acid sequence, 263 residues long: Phosphatidylglycerol--prolipoprotein diacylglyceryl transferase (263 aa).

A run of 4 helical transmembrane segments spans residues 6 to 26 (VIFS…VLGI), 50 to 70 (LLTA…VLIY), 85 to 105 (TWEG…AVII), and 112 to 132 (IPIF…LFLG). Arg133 lines the a 1,2-diacyl-sn-glycero-3-phospho-(1'-sn-glycerol) pocket. Helical transmembrane passes span 169–189 (LYEA…LFFL), 197–217 (GALT…VEFF), and 233–253 (MGQL…LGAL).

Belongs to the Lgt family.

The protein localises to the cell membrane. The catalysed reaction is L-cysteinyl-[prolipoprotein] + a 1,2-diacyl-sn-glycero-3-phospho-(1'-sn-glycerol) = an S-1,2-diacyl-sn-glyceryl-L-cysteinyl-[prolipoprotein] + sn-glycerol 1-phosphate + H(+). Its pathway is protein modification; lipoprotein biosynthesis (diacylglyceryl transfer). Functionally, catalyzes the transfer of the diacylglyceryl group from phosphatidylglycerol to the sulfhydryl group of the N-terminal cysteine of a prolipoprotein, the first step in the formation of mature lipoproteins. The sequence is that of Phosphatidylglycerol--prolipoprotein diacylglyceryl transferase from Wolbachia sp. subsp. Drosophila simulans (strain wRi).